The primary structure comprises 152 residues: uncharacterized protein (152 aa).

The helical transmembrane segment at 12-34 (ALLYLGGGLLAMIYGLITFFMAF) threads the bilayer.

The protein to B.subtilis YfjD.

The protein localises to the membrane. This is an uncharacterized protein from Bacillus subtilis (strain 168).